We begin with the raw amino-acid sequence, 1433 residues long: Bacillopeptidase F (1433 aa).

The first 30 residues, 1–30 (MRKKTKNRLISSVLSTVVISSLLFPGAAGA), serve as a signal peptide directing secretion. Residues 31–194 (SSKVTSPSVK…NMKKAQKAIK (164 aa)) constitute a propeptide that is removed on maturation. The 110-residue stretch at 68–177 (TFLIKFKDLA…KVLPNEKRQL (110 aa)) folds into the Inhibitor I9 domain. Positions 200 to 512 (EWNVDQIDAP…HGLVNAFDAV (313 aa)) constitute a Peptidase S8 domain. Catalysis depends on charge relay system residues Asp227, His274, and Ser452. Residues 756-1433 (SAYKGQNIQV…NGKLNMNTEN (678 aa)) constitute a propeptide that is removed on maturation. Residues 800–830 (KLGVEKPSGKQKKKPVNPKKAKPSANTAVKH) are disordered. The span at 808-821 (GKQKKKPVNPKKAK) shows a compositional bias: basic residues.

This sequence belongs to the peptidase S8 family.

It localises to the secreted. This chain is Bacillopeptidase F (bpr), found in Bacillus subtilis (strain 168).